A 330-amino-acid polypeptide reads, in one-letter code: MNAYYEQDADLKYLQGKNIAVLGFGSQGHAHALNLKESGLNVCVGLRPDSSSCEKARENGLEVNTIADAVAWADIVMVLLPDQYQKSIYESEIKPNLKEGNTLAFAHGFNIHYNQIVPPGTVNVIMIAPKSPGHLVRRTYTQGNGVPCLIAVHQDYTGEARQQALAWAKGLGGTKAGVIETTFKNETETDLFGEQAVLCGGSAELIKAGFETLVEAGYPEELAYFECMHELKLIVDLYYEGGLSRMNYSVSDTAEYGGMTRGPRVITSDVKAEMKKILEEVQDGRFAKEFIDECNAGYPNMKKLRESNADHPIEKVGAKLRDMMSWLLKK.

Residues 1 to 181 enclose the KARI N-terminal Rossmann domain; it reads MNAYYEQDAD…GGTKAGVIET (181 aa). Residues 24–27, R47, S50, S52, and 82–85 each bind NADP(+); these read FGSQ and DQYQ. The active site involves H107. G133 contributes to the NADP(+) binding site. Residues 182–327 form the KARI C-terminal knotted domain; sequence TFKNETETDL…AKLRDMMSWL (146 aa). Mg(2+) is bound by residues D190, E194, E226, and E230. Residue S251 coordinates substrate.

It belongs to the ketol-acid reductoisomerase family. The cofactor is Mg(2+).

It catalyses the reaction (2R)-2,3-dihydroxy-3-methylbutanoate + NADP(+) = (2S)-2-acetolactate + NADPH + H(+). The catalysed reaction is (2R,3R)-2,3-dihydroxy-3-methylpentanoate + NADP(+) = (S)-2-ethyl-2-hydroxy-3-oxobutanoate + NADPH + H(+). It functions in the pathway amino-acid biosynthesis; L-isoleucine biosynthesis; L-isoleucine from 2-oxobutanoate: step 2/4. The protein operates within amino-acid biosynthesis; L-valine biosynthesis; L-valine from pyruvate: step 2/4. Involved in the biosynthesis of branched-chain amino acids (BCAA). Catalyzes an alkyl-migration followed by a ketol-acid reduction of (S)-2-acetolactate (S2AL) to yield (R)-2,3-dihydroxy-isovalerate. In the isomerase reaction, S2AL is rearranged via a Mg-dependent methyl migration to produce 3-hydroxy-3-methyl-2-ketobutyrate (HMKB). In the reductase reaction, this 2-ketoacid undergoes a metal-dependent reduction by NADPH to yield (R)-2,3-dihydroxy-isovalerate. The chain is Ketol-acid reductoisomerase (NADP(+)) from Chlorobium phaeobacteroides (strain BS1).